Here is a 309-residue protein sequence, read N- to C-terminus: Putative rhizopine-binding protein (309 aa).

A signal peptide spans 1-20 (MKKFIIGIAAAVLVSTAAHA).

Belongs to the bacterial solute-binding protein 2 family.

Its subcellular location is the periplasm. In terms of biological role, involved in rhizopine (L-3-O-methyl-scyllo-inosamine) catabolism. Could be involved in its high affinity transport. This Rhizobium meliloti (Ensifer meliloti) protein is Putative rhizopine-binding protein (mocB).